The sequence spans 192 residues: Adenylate kinase (192 aa).

12 to 17 (GSGKTT) provides a ligand contact to ATP. An NMP region spans residues 34-63 (STGDLLRAEVASGSELGQTIKSYIDNGNLV). Residues Thr-35, Arg-40, 61 to 63 (NLV), 88 to 91 (GFPR), and Gln-95 each bind AMP. The segment at 130–136 (GRARGAD) is LID. Position 131 (Arg-131) interacts with ATP. Positions 133 and 145 each coordinate AMP. Arg-173 is a binding site for ATP.

The protein belongs to the adenylate kinase family. Monomer.

It localises to the cytoplasm. The catalysed reaction is AMP + ATP = 2 ADP. It participates in purine metabolism; AMP biosynthesis via salvage pathway; AMP from ADP: step 1/1. In terms of biological role, catalyzes the reversible transfer of the terminal phosphate group between ATP and AMP. Plays an important role in cellular energy homeostasis and in adenine nucleotide metabolism. In Nautilia profundicola (strain ATCC BAA-1463 / DSM 18972 / AmH), this protein is Adenylate kinase.